The chain runs to 168 residues: Cytochrome c-type biogenesis protein CcmE (168 aa).

The Cytoplasmic segment spans residues 1–23; sequence MTTAPSGLPGTPLPPARRRERPR. The chain crosses the membrane as a helical; Signal-anchor for type II membrane protein span at residues 24-44; it reads WPLLVAGAAVLGLIGYMVLGN. Topologically, residues 45-168 are extracellular; sequence ANSNLVYYVL…KILNDQSTKP (124 aa). Heme contacts are provided by His-137 and Tyr-141. Residues 145–168 are disordered; it reads DSKGEGQYSQDDLKKILNDQSTKP.

The protein belongs to the CcmE/CycJ family.

Its subcellular location is the cell membrane. Its function is as follows. Heme chaperone required for the biogenesis of c-type cytochromes. Transiently binds heme delivered by CcmC and transfers the heme to apo-cytochromes in a process facilitated by CcmF and CcmH. This is Cytochrome c-type biogenesis protein CcmE from Deinococcus radiodurans (strain ATCC 13939 / DSM 20539 / JCM 16871 / CCUG 27074 / LMG 4051 / NBRC 15346 / NCIMB 9279 / VKM B-1422 / R1).